The sequence spans 703 residues: Protein CNGC15c (703 aa).

A compositionally biased stretch (basic and acidic residues) spans 1–10 (MGFDNPRSER). Positions 1–23 (MGFDNPRSERFEDDPEISKIPTT) are disordered. 5 consecutive transmembrane segments (helical) span residues 91–111 (IFLV…YLPV), 179–199 (GFWL…WIII), 216–236 (FFII…SSQI), 255–275 (LMLY…LSIE), and 372–392 (FIGE…LFAL). Residue 480–565 (LFDQMDERML…WALDPRPSVI (86 aa)) coordinates a nucleoside 3',5'-cyclic phosphate. The IQ domain occupies 616–644 (RTWAACFIQAAWRRHKKRKEAAELRAKEN). Positions 676–703 (KGVNMHSGTNSGVVSSLQKPTEPDFSDE) are disordered. The segment covering 681–694 (HSGTNSGVVSSLQK) has biased composition (polar residues).

The protein belongs to the cyclic nucleotide-gated cation channel (TC 1.A.1.5) family. As to quaternary structure, interacts (via N-terminus) with DMI1 (via c-terminus). The Nod factor has no effect on this interaction, implying that the complex is maintained after activation. Expressed in roots, stems, leaves, flowers and pods.

The protein resides in the nucleus membrane. Its function is as follows. Cyclic nucleotide-gated channel involved in the establishment of both rhizobial and mycorrhizal associations. Required for full activation of nuclear-localized Ca(2+) oscillations by Nod and Myc factors. Simultaneous activation of the K(+)-permeable channel DMI1 and the Ca(2+) channel CNGC15 can give rise to sustained Ca(2+) oscillations. May function during fertilization in both female and male gametophytic Ca(2+) signaling. The chain is Protein CNGC15c from Medicago truncatula (Barrel medic).